The chain runs to 74 residues: Putative defensin-like protein 36 (74 aa).

The signal sequence occupies residues 1 to 22 (MASNKVSFFLVLCLCILLAGEC). Cystine bridges form between Cys33–Cys59, Cys45–Cys69, and Cys49–Cys71.

Belongs to the DEFL family.

The protein resides in the secreted. The protein is Putative defensin-like protein 36 of Arabidopsis thaliana (Mouse-ear cress).